Consider the following 420-residue polypeptide: Type II methyltransferase M.HgiCI (420 aa).

Residues 2–417 (LKFIDLFAGI…LDLFKSADLA (416 aa)) form the SAM-dependent MTase C5-type domain. Cys-75 is an active-site residue.

It belongs to the class I-like SAM-binding methyltransferase superfamily. C5-methyltransferase family.

The enzyme catalyses a 2'-deoxycytidine in DNA + S-adenosyl-L-methionine = a 5-methyl-2'-deoxycytidine in DNA + S-adenosyl-L-homocysteine + H(+). In terms of biological role, a methylase that recognizes the double-stranded sequence 5'-GGYRCC-3', methylates C-5 on both strands, and protects the DNA from cleavage by the HgiCI endonuclease. The sequence is that of Type II methyltransferase M.HgiCI (hgiCIM) from Herpetosiphon aurantiacus (Herpetosiphon giganteus).